A 428-amino-acid polypeptide reads, in one-letter code: Sorting nexin-31 (428 aa).

Positions M1–T107 constitute a PX domain.

The protein belongs to the sorting nexin family.

Functionally, may be involved in protein trafficking. The polypeptide is Sorting nexin-31 (snx31) (Xenopus tropicalis (Western clawed frog)).